The primary structure comprises 76 residues: uncharacterized protein (76 aa).

Residues Ser53–Val70 traverse the membrane as a helical segment.

Its subcellular location is the membrane. This is an uncharacterized protein from Haemophilus influenzae (strain ATCC 51907 / DSM 11121 / KW20 / Rd).